The sequence spans 469 residues: 3-isopropylmalate dehydratase large subunit (469 aa).

Residues Cys347, Cys410, and Cys413 each contribute to the [4Fe-4S] cluster site.

This sequence belongs to the aconitase/IPM isomerase family. LeuC type 1 subfamily. In terms of assembly, heterodimer of LeuC and LeuD. [4Fe-4S] cluster is required as a cofactor.

It carries out the reaction (2R,3S)-3-isopropylmalate = (2S)-2-isopropylmalate. It functions in the pathway amino-acid biosynthesis; L-leucine biosynthesis; L-leucine from 3-methyl-2-oxobutanoate: step 2/4. In terms of biological role, catalyzes the isomerization between 2-isopropylmalate and 3-isopropylmalate, via the formation of 2-isopropylmaleate. This chain is 3-isopropylmalate dehydratase large subunit, found in Ralstonia nicotianae (strain ATCC BAA-1114 / GMI1000) (Ralstonia solanacearum).